Here is a 457-residue protein sequence, read N- to C-terminus: tRNA modification GTPase MnmE (457 aa).

(6S)-5-formyl-5,6,7,8-tetrahydrofolate is bound by residues Arg-25, Glu-87, and Arg-126. The region spanning 223 to 377 (GISTAIIGRP…IEERINQLFF (155 aa)) is the TrmE-type G domain. Position 233 (Asn-233) interacts with K(+). Residues 233–238 (NVGKSS), 252–258 (TDIEGTT), and 277–280 (DTAG) each bind GTP. Ser-237 lines the Mg(2+) pocket. K(+)-binding residues include Thr-252, Ile-254, and Thr-257. Mg(2+) is bound at residue Thr-258. A (6S)-5-formyl-5,6,7,8-tetrahydrofolate-binding site is contributed by Lys-457.

This sequence belongs to the TRAFAC class TrmE-Era-EngA-EngB-Septin-like GTPase superfamily. TrmE GTPase family. In terms of assembly, homodimer. Heterotetramer of two MnmE and two MnmG subunits. It depends on K(+) as a cofactor.

The protein resides in the cytoplasm. Exhibits a very high intrinsic GTPase hydrolysis rate. Involved in the addition of a carboxymethylaminomethyl (cmnm) group at the wobble position (U34) of certain tRNAs, forming tRNA-cmnm(5)s(2)U34. The chain is tRNA modification GTPase MnmE from Streptococcus sanguinis (strain SK36).